A 267-amino-acid chain; its full sequence is Tryptophan synthase alpha chain (267 aa).

Active-site proton acceptor residues include glutamate 49 and aspartate 60.

It belongs to the TrpA family. Tetramer of two alpha and two beta chains.

It carries out the reaction (1S,2R)-1-C-(indol-3-yl)glycerol 3-phosphate + L-serine = D-glyceraldehyde 3-phosphate + L-tryptophan + H2O. The protein operates within amino-acid biosynthesis; L-tryptophan biosynthesis; L-tryptophan from chorismate: step 5/5. Its function is as follows. The alpha subunit is responsible for the aldol cleavage of indoleglycerol phosphate to indole and glyceraldehyde 3-phosphate. This chain is Tryptophan synthase alpha chain, found in Rippkaea orientalis (strain PCC 8801 / RF-1) (Cyanothece sp. (strain PCC 8801)).